Here is a 555-residue protein sequence, read N- to C-terminus: uncharacterized protein (555 aa).

ABC transporter domains follow at residues valine 4–lysine 244 and isoleucine 255–methionine 547. ATP-binding positions include glycine 36–serine 43 and glycine 292–threonine 299.

Belongs to the ABC transporter superfamily.

This is an uncharacterized protein from Methanocaldococcus jannaschii (strain ATCC 43067 / DSM 2661 / JAL-1 / JCM 10045 / NBRC 100440) (Methanococcus jannaschii).